The following is a 401-amino-acid chain: MIAVLGIKRNTPIEIREKLTIKVNKHDEYLDKLLKYLEGVVILATCNRTEIYFNVSSINEELLKKIFEIFNWNYSYRKYIFISEDKKACKHLFEVTCGFHSKILGEDQILGQVKTSYFKSLNAKALNLELQRLFQYAITCGKKFKSQSRLFEIPVSSASIVVNESINKDCKKFMVLGYGDVGRLTMKYLLAHNINEVYLAVRNKKIKDEIMDKRVNVIDFEEKNKYINDMDCVISCTSAPHIVIKKQDINNIGSNIIIYDLAVPRDVDDDINDIDRAQVYNIDNISHINDGNKKMRFDKMDSNKFILEKYLNEYYEWKRLRSIAPFIEELKVTSKEIYNKRITTFKNKCTDKDDVDLANRMIKSTSDYYMNRAIDIMKEETLKGSEEECLRIIKSIFMTKK.

Substrate is bound by residues 45 to 48, serine 101, 106 to 108, and glutamine 112; these read TCNR and EDQ. The active-site Nucleophile is cysteine 46. NADP(+) is bound at residue 177–182; that stretch reads GYGDVG.

This sequence belongs to the glutamyl-tRNA reductase family. In terms of assembly, homodimer.

The catalysed reaction is (S)-4-amino-5-oxopentanoate + tRNA(Glu) + NADP(+) = L-glutamyl-tRNA(Glu) + NADPH + H(+). Its pathway is porphyrin-containing compound metabolism; protoporphyrin-IX biosynthesis; 5-aminolevulinate from L-glutamyl-tRNA(Glu): step 1/2. In terms of biological role, catalyzes the NADPH-dependent reduction of glutamyl-tRNA(Glu) to glutamate 1-semialdehyde (GSA). The sequence is that of Glutamyl-tRNA reductase from Clostridium botulinum (strain Eklund 17B / Type B).